A 355-amino-acid polypeptide reads, in one-letter code: Phosphoserine aminotransferase (355 aa).

Residue arginine 41 participates in L-glutamate binding. Pyridoxal 5'-phosphate is bound by residues alanine 75–serine 76, tryptophan 99, threonine 147, aspartate 166, and glutamine 189. An N6-(pyridoxal phosphate)lysine modification is found at lysine 190. A pyridoxal 5'-phosphate-binding site is contributed by asparagine 231–threonine 232.

The protein belongs to the class-V pyridoxal-phosphate-dependent aminotransferase family. SerC subfamily. In terms of assembly, homodimer. Pyridoxal 5'-phosphate is required as a cofactor.

It is found in the cytoplasm. It carries out the reaction O-phospho-L-serine + 2-oxoglutarate = 3-phosphooxypyruvate + L-glutamate. The enzyme catalyses 4-(phosphooxy)-L-threonine + 2-oxoglutarate = (R)-3-hydroxy-2-oxo-4-phosphooxybutanoate + L-glutamate. Its pathway is amino-acid biosynthesis; L-serine biosynthesis; L-serine from 3-phospho-D-glycerate: step 2/3. It functions in the pathway cofactor biosynthesis; pyridoxine 5'-phosphate biosynthesis; pyridoxine 5'-phosphate from D-erythrose 4-phosphate: step 3/5. Its function is as follows. Catalyzes the reversible conversion of 3-phosphohydroxypyruvate to phosphoserine and of 3-hydroxy-2-oxo-4-phosphonooxybutanoate to phosphohydroxythreonine. The chain is Phosphoserine aminotransferase from Parabacteroides distasonis (strain ATCC 8503 / DSM 20701 / CIP 104284 / JCM 5825 / NCTC 11152).